Consider the following 326-residue polypeptide: 4-hydroxythreonine-4-phosphate dehydrogenase (326 aa).

Positions 132 and 133 each coordinate substrate. Positions 163, 208, and 263 each coordinate a divalent metal cation. Substrate contacts are provided by Lys-271, Asn-280, and Arg-289.

Belongs to the PdxA family. As to quaternary structure, homodimer. Zn(2+) is required as a cofactor. It depends on Mg(2+) as a cofactor. Requires Co(2+) as cofactor.

The protein resides in the cytoplasm. The catalysed reaction is 4-(phosphooxy)-L-threonine + NAD(+) = 3-amino-2-oxopropyl phosphate + CO2 + NADH. Its pathway is cofactor biosynthesis; pyridoxine 5'-phosphate biosynthesis; pyridoxine 5'-phosphate from D-erythrose 4-phosphate: step 4/5. Its function is as follows. Catalyzes the NAD(P)-dependent oxidation of 4-(phosphooxy)-L-threonine (HTP) into 2-amino-3-oxo-4-(phosphooxy)butyric acid which spontaneously decarboxylates to form 3-amino-2-oxopropyl phosphate (AHAP). In Roseobacter denitrificans (strain ATCC 33942 / OCh 114) (Erythrobacter sp. (strain OCh 114)), this protein is 4-hydroxythreonine-4-phosphate dehydrogenase.